The primary structure comprises 320 residues: Atrochrysone carboxyl ACP thioesterase (320 aa).

Zn(2+) contacts are provided by histidine 103, histidine 105, aspartate 107, and histidine 108. Aspartate 107 functions as the Proton donor/acceptor in the catalytic mechanism.

The protein belongs to the metallo-beta-lactamase superfamily. The cofactor is Zn(2+).

It carries out the reaction atrochrysone carboxyl-[ACP] + H2O = atrochrysone carboxylate + holo-[ACP] + H(+). Its pathway is secondary metabolite biosynthesis. Functionally, atrochrysone carboxyl ACP thioesterase; part of the gene cluster that mediates the biosynthesis of geodin, an intermediate in the biosynthesis of other natural products. The pathway begins with the synthesis of atrochrysone thioester by the polyketide synthase (PKS) gedC. The atrochrysone carboxyl ACP thioesterase gedB then breaks the thioester bond and releases the atrochrysone carboxylic acid from gedC. The atrochrysone carboxylic acid is then converted to atrochrysone which is further transformed into emodinanthrone. The next step is performed by the emodinanthrone oxygenase gedH that catalyzes the oxidation of emodinanthrone to emodin. Emodin O-methyltransferase encoded probably by gedA then catalyzes methylation of the 8-hydroxy group of emodin to form questin. Ring cleavage of questin by questin oxidase gedK leads to desmethylsulochrin via several intermediates including questin epoxide. Another methylation step probably catalyzed by methyltransferase gedG leads to the formation of sulochrin which is further converted to dihydrogeodin by the sulochrin halogenase gedL. Finally, the dihydrogeodin oxidase gedJ catalyzes the stereospecific phenol oxidative coupling reaction converting dihydrogeodin to geodin. The protein is Atrochrysone carboxyl ACP thioesterase of Aspergillus terreus (strain NIH 2624 / FGSC A1156).